Reading from the N-terminus, the 361-residue chain is Inactive 2'-5'-oligoadenylate synthase 1D (361 aa).

This sequence belongs to the 2-5A synthase family. Interacts with OAS1A, the interaction inhibits OAS1A catalytic activity. As to expression, expressed specifically in oocytes (at protein level). Expressed at highest level in ovary with lesser amounts in intestine, brain, thymus lung, kidney, liver and uterus.

The protein localises to the cytoplasm. Does not have 2'-5'-oligoadenylate synthetase activity, but can bind double-stranded RNA. May play a role in the control of female fertility, possibly by binding to and inhibiting OAS1A. The polypeptide is Inactive 2'-5'-oligoadenylate synthase 1D (Mus musculus (Mouse)).